Consider the following 390-residue polypeptide: Succinate--CoA ligase [ADP-forming] subunit beta (390 aa).

Positions 9-248 (KEILRRHKAN…ITEEDPLEVQ (240 aa)) constitute an ATP-grasp domain. ATP-binding positions include lysine 50, 57 to 59 (GRG), glutamate 103, isoleucine 106, and glutamate 111. Asparagine 203 and aspartate 217 together coordinate Mg(2+). Substrate is bound by residues asparagine 268 and 325–327 (GIV).

Belongs to the succinate/malate CoA ligase beta subunit family. In terms of assembly, heterotetramer of two alpha and two beta subunits. Mg(2+) serves as cofactor.

The catalysed reaction is succinate + ATP + CoA = succinyl-CoA + ADP + phosphate. It carries out the reaction GTP + succinate + CoA = succinyl-CoA + GDP + phosphate. Its pathway is carbohydrate metabolism; tricarboxylic acid cycle; succinate from succinyl-CoA (ligase route): step 1/1. Its function is as follows. Succinyl-CoA synthetase functions in the citric acid cycle (TCA), coupling the hydrolysis of succinyl-CoA to the synthesis of either ATP or GTP and thus represents the only step of substrate-level phosphorylation in the TCA. The beta subunit provides nucleotide specificity of the enzyme and binds the substrate succinate, while the binding sites for coenzyme A and phosphate are found in the alpha subunit. This chain is Succinate--CoA ligase [ADP-forming] subunit beta, found in Leptospira borgpetersenii serovar Hardjo-bovis (strain JB197).